The primary structure comprises 285 residues: Ubiquinone biosynthesis protein COQ4, mitochondrial (285 aa).

Residues 1–11 (MPPAVRQGMRT) constitute a mitochondrion transit peptide. Positions 166, 167, 170, and 182 each coordinate Zn(2+).

The protein belongs to the COQ4 family. As to quaternary structure, component of a multi-subunit COQ enzyme complex, composed of at least COQ3, COQ4, COQ5, COQ6, COQ7 and COQ9. The cofactor is Zn(2+).

Its subcellular location is the mitochondrion inner membrane. It carries out the reaction a 4-hydroxy-3-methoxy-5-(all-trans-polyprenyl)benzoate + H(+) = a 2-methoxy-6-(all-trans-polyprenyl)phenol + CO2. It functions in the pathway cofactor biosynthesis; ubiquinone biosynthesis. Lyase that catalyzes the C1-decarboxylation of 4-hydroxy-3-methoxy-5-(all-trans-polyprenyl)benzoic acid into 2-methoxy-6-(all-trans-polyprenyl)phenol during ubiquinone biosynthesis. This chain is Ubiquinone biosynthesis protein COQ4, mitochondrial, found in Paracoccidioides lutzii (strain ATCC MYA-826 / Pb01) (Paracoccidioides brasiliensis).